A 129-amino-acid polypeptide reads, in one-letter code: Glycine cleavage system H protein (129 aa).

Residues 24-106 (TYTVGITEHA…YGQGWIFKIK (83 aa)) form the Lipoyl-binding domain. At K65 the chain carries N6-lipoyllysine.

It belongs to the GcvH family. As to quaternary structure, the glycine cleavage system is composed of four proteins: P, T, L and H. (R)-lipoate is required as a cofactor.

In terms of biological role, the glycine cleavage system catalyzes the degradation of glycine. The H protein shuttles the methylamine group of glycine from the P protein to the T protein. The chain is Glycine cleavage system H protein from Cronobacter sakazakii (strain ATCC BAA-894) (Enterobacter sakazakii).